The sequence spans 254 residues: E3 ubiquitin-protein ligase NEURL3 (254 aa).

In terms of domain architecture, NHR spans 17–174 (ALSFHGNATG…TTKAIELLDP (158 aa)). The RING-type zinc-finger motif lies at 197–236 (CVICFHNTANTRLMPCGHSHFCGSCAWHIFKDTARCPICR).

In terms of tissue distribution, expressed in alveolar epithelial type II cells.

It is found in the cytoplasm. It carries out the reaction S-ubiquitinyl-[E2 ubiquitin-conjugating enzyme]-L-cysteine + [acceptor protein]-L-lysine = [E2 ubiquitin-conjugating enzyme]-L-cysteine + N(6)-ubiquitinyl-[acceptor protein]-L-lysine.. Its pathway is protein modification; protein ubiquitination. Its function is as follows. E3 ubiquitin-protein ligase that plays a role in various biological processes such as lung development or innate immunity. Seems to utilize UBE2E1. Promotes innate antiviral response by catalyzing 'Lys-63'-linked ubiquitination of IRF7. Plays an essential role in TLR4-mediated activation of MAPK pathways by promoting 'Lys-48'-linked polyubiquitination of the phosphatase DUSP1/MKP1. In Mus musculus (Mouse), this protein is E3 ubiquitin-protein ligase NEURL3 (Neurl3).